The primary structure comprises 501 residues: MGVFSNLRGPKIGLTHEELPVVANGSTSSSSSPSSFKRKVSTFLPICVALVVIIEIGFLCRLDNASLVDTLTHFFTKSSSDLKVGSGIEKCQEWLERVDSVTYSRDFTKDPIFISGSNKDFKSCSVDCVMGFTSDKKPDAAFGLSHQPGTLSIIRSMESAQYYQENNLAQARRKGYDIVMTTSLSSDVPVGYFSWAEYDIMAPVQPKTEKALAAAFISNCAARNFRLQALEALMKTNVKIDSYGGCHRNRDGSVEKVEALKHYKFSLAFENTNEEDYVTEKFFQSLVAGSVPVVVGAPNIEEFAPSPDSFLHIKQMDDVKAVAKKMKYLADNPDAYNQTLRWKHEGPSDSFKALIDMAAVHSSCRLCIFVATRIREQEEKSPEFKRRPCKCTRGSETVYHLYVRERGRFDMESIFLKDGNLTLEALESAVLAKFMSLRYEPIWKKERPASLRGDGKLRVHGIYPIGLTQRQALYNFKFEGNSSLSTHIQRNPCPKFEVVFV.

Residues 1–39 are Cytoplasmic-facing; that stretch reads MGVFSNLRGPKIGLTHEELPVVANGSTSSSSSPSSFKRK. A helical; Signal-anchor for type II membrane protein transmembrane segment spans residues 40 to 60; it reads VSTFLPICVALVVIIEIGFLC. Topologically, residues 61-501 are lumenal; it reads RLDNASLVDT…PCPKFEVVFV (441 aa). N-linked (GlcNAc...) asparagine glycosylation is found at Asn-64, Asn-337, Asn-420, and Asn-481.

This sequence belongs to the glycosyltransferase 10 family. It depends on Mg(2+) as a cofactor. The cofactor is Mn(2+). Post-translationally, glycosylation may be important for enzymatic activity.

The protein resides in the golgi apparatus. Its subcellular location is the golgi stack membrane. The enzyme catalyses N(4)-{beta-D-GlcNAc-(1-&gt;2)-alpha-D-Man-(1-&gt;3)-[beta-D-GlcNAc-(1-&gt;2)-alpha-D-Man-(1-&gt;6)]-beta-D-Man-(1-&gt;4)-beta-D-GlcNAc-(1-&gt;4)-beta-D-GlcNAc}-L-asparaginyl-[protein] + GDP-beta-L-fucose = N(4)-{beta-D-GlcNAc-(1-&gt;2)-alpha-D-Man-(1-&gt;3)-[beta-D-GlcNAc-(1-&gt;2)-alpha-D-Man-(1-&gt;6)]-beta-D-Man-(1-&gt;4)-beta-D-GlcNAc-(1-&gt;4)-[alpha-L-Fuc(1-&gt;3)]-beta-D-GlcNAc}-L-asparaginyl-[protein] + GDP + H(+). The protein operates within protein modification; protein glycosylation. Inhibited by Cu(2+) and Zn(2+). Functionally, involved in cell wall synthesis. Preferentially catalyzes the addition of fucose in alpha 1-3 linkage to the first GlcNAc residue next to the peptide chains in N-glycans. This is Glycoprotein 3-alpha-L-fucosyltransferase A (FUT11) from Arabidopsis thaliana (Mouse-ear cress).